We begin with the raw amino-acid sequence, 85 residues long: MATKKAGGSTRNGRDSEAKRLGVKRFGGESVLAGSIIVRQRGTKFHAGSNVGMGRDHTLFATADGKVKFEVKGEKNRKYVSIIAE.

Residues 1-20 (MATKKAGGSTRNGRDSEAKR) are disordered.

This sequence belongs to the bacterial ribosomal protein bL27 family.

In Pasteurella multocida (strain Pm70), this protein is Large ribosomal subunit protein bL27.